The chain runs to 144 residues: Large ribosomal subunit protein uL15 (144 aa).

The disordered stretch occupies residues 1-57; the sequence is MKLNDLSPAPGSRREKHRPGRGIGSGLGKTGGRGHKGQSSRSGGTIAPGFEGGQQPL. Gly residues predominate over residues 21 to 31; that stretch reads RGIGSGLGKTG.

It belongs to the universal ribosomal protein uL15 family. In terms of assembly, part of the 50S ribosomal subunit.

In terms of biological role, binds to the 23S rRNA. In Pseudomonas savastanoi pv. phaseolicola (strain 1448A / Race 6) (Pseudomonas syringae pv. phaseolicola (strain 1448A / Race 6)), this protein is Large ribosomal subunit protein uL15.